The sequence spans 253 residues: uncharacterized protein (253 aa).

It belongs to the MG439/MG440 family.

This is an uncharacterized protein from Mycoplasma pneumoniae (strain ATCC 29342 / M129 / Subtype 1) (Mycoplasmoides pneumoniae).